Reading from the N-terminus, the 490-residue chain is Betaine aldehyde dehydrogenase (490 aa).

Residues Ser26, Ile27, and Asp93 each coordinate K(+). 150–152 serves as a coordination point for NAD(+); the sequence is GAW. Lys162 acts as the Charge relay system in catalysis. NAD(+) is bound by residues 176–179 and 230–233; these read KPSE and GVET. Leu246 lines the K(+) pocket. Glu252 serves as the catalytic Proton acceptor. Gly254, Cys286, and Glu387 together coordinate NAD(+). Cys286 acts as the Nucleophile in catalysis. Residue Cys286 is modified to Cysteine sulfenic acid (-SOH). Positions 457 and 460 each coordinate K(+). The active-site Charge relay system is the Glu464.

The protein belongs to the aldehyde dehydrogenase family. Dimer of dimers. K(+) serves as cofactor.

The enzyme catalyses betaine aldehyde + NAD(+) + H2O = glycine betaine + NADH + 2 H(+). The protein operates within amine and polyamine biosynthesis; betaine biosynthesis via choline pathway; betaine from betaine aldehyde: step 1/1. Involved in the biosynthesis of the osmoprotectant glycine betaine. Catalyzes the irreversible oxidation of betaine aldehyde to the corresponding acid. In Acinetobacter baumannii (strain AB307-0294), this protein is Betaine aldehyde dehydrogenase.